Here is a 177-residue protein sequence, read N- to C-terminus: Small ribosomal subunit protein bS16 (177 aa).

Residues 80–177 (GIIAMPANGS…AAEAPKEEAK (98 aa)) are disordered. A compositionally biased stretch (low complexity) spans 107–122 (AAPAAAPKAEAAPAAE).

The protein belongs to the bacterial ribosomal protein bS16 family.

The polypeptide is Small ribosomal subunit protein bS16 (Pelagibacter ubique (strain HTCC1062)).